Reading from the N-terminus, the 307-residue chain is Solute carrier family 25 member 53 (307 aa).

The segment at 1 to 23 (MGEQNHSPGKELQHRTRAEAPGK) is disordered. Over residues 8–22 (PGKELQHRTRAEAPG) the composition is skewed to basic and acidic residues. Solcar repeat units follow at residues 25-105 (SWHS…LLCF), 112-202 (HTLG…IQDG), and 210-302 (HWVP…HSRK). A run of 6 helical transmembrane segments spans residues 31 to 51 (YALGAVSNFMSTFLTFPIYKV), 82 to 102 (YPPLLSKTLQGTLLFGTYDSL), 112 to 132 (HTLGHRWAAGLMSGVVEAVAL), 181 to 201 (VLARNSLGSALYFSFKDPIQD), 215 to 235 (LVSGSVNGTITCLVLYPLIVL), and 269 to 290 (IYRGGSLVILRSSVTWGLTTAI).

This sequence belongs to the mitochondrial carrier (TC 2.A.29) family.

The protein resides in the mitochondrion inner membrane. This is Solute carrier family 25 member 53 (SLC25A53) from Homo sapiens (Human).